The following is a 139-amino-acid chain: MTTQPSKQLETFENPVQTRDYRIHMEIPEFTCLCPKTGQPDFARLTLDYIPDKKCIELKSLKLYIWSYRDEGAFHEAVTNRILDDLVAAMKPRFIRLTSKFYVRGGIFTNVVAEHRKKGWQPQPPVLLEVFEQQFNTHG.

The active-site Thioimide intermediate is cysteine 34. Aspartate 41 (proton donor) is an active-site residue. Substrate-binding positions include 56-58 and 75-76; these read IEL and HE.

Belongs to the GTP cyclohydrolase I family. QueF type 1 subfamily.

The protein localises to the cytoplasm. It catalyses the reaction 7-aminomethyl-7-carbaguanine + 2 NADP(+) = 7-cyano-7-deazaguanine + 2 NADPH + 3 H(+). It functions in the pathway tRNA modification; tRNA-queuosine biosynthesis. Functionally, catalyzes the NADPH-dependent reduction of 7-cyano-7-deazaguanine (preQ0) to 7-aminomethyl-7-deazaguanine (preQ1). This chain is NADPH-dependent 7-cyano-7-deazaguanine reductase, found in Nitrosomonas europaea (strain ATCC 19718 / CIP 103999 / KCTC 2705 / NBRC 14298).